The primary structure comprises 852 residues: Lon protease homolog 2, peroxisomal (852 aa).

S2 bears the N-acetylserine mark. The region spanning 13–222 is the Lon N-terminal domain; the sequence is LPLLLTHEGV…MTIPLLVRQI (210 aa). Residue 375 to 382 participates in ATP binding; it reads GPPGVGKT. In terms of domain architecture, Lon proteolytic spans 651–837; that stretch reads LSQPGVAIGL…DEVLNAAFDG (187 aa). Residues S743 and K786 contribute to the active site. A Microbody targeting signal motif is present at residues 850–852; it reads SKL.

It belongs to the peptidase S16 family. Interacts with PEX5. Interacts with TYSND1. May interact with enzymes involved in beta-oxidation of fatty acids, including ACOX1/AOX.

Its subcellular location is the peroxisome matrix. The catalysed reaction is Hydrolysis of proteins in presence of ATP.. ATP-dependent serine protease that mediates the selective degradation of misfolded and unassembled polypeptides in the peroxisomal matrix. Necessary for type 2 peroxisome targeting signal (PTS2)-containing protein processing and facilitates peroxisome matrix protein import. May indirectly regulate peroxisomal fatty acid beta-oxidation through degradation of the self-processed forms of TYSND1. The polypeptide is Lon protease homolog 2, peroxisomal (Bos taurus (Bovine)).